The following is a 239-amino-acid chain: Small ribosomal subunit protein uS2 (239 aa).

Belongs to the universal ribosomal protein uS2 family.

In Francisella tularensis subsp. tularensis (strain WY96-3418), this protein is Small ribosomal subunit protein uS2.